The primary structure comprises 176 residues: RNA pyrophosphohydrolase (176 aa).

The Nudix hydrolase domain maps to 6–149 (GYRPNVGIVI…KRDVYRRVMK (144 aa)). Positions 38-59 (GGINPGESAEQAMYRELFEEVG) match the Nudix box motif.

Belongs to the Nudix hydrolase family. RppH subfamily. Requires a divalent metal cation as cofactor.

Its function is as follows. Accelerates the degradation of transcripts by removing pyrophosphate from the 5'-end of triphosphorylated RNA, leading to a more labile monophosphorylated state that can stimulate subsequent ribonuclease cleavage. This chain is RNA pyrophosphohydrolase, found in Salmonella arizonae (strain ATCC BAA-731 / CDC346-86 / RSK2980).